The sequence spans 78 residues: D-alanyl carrier protein (78 aa).

Positions 1–78 (MAFRENVLEI…MIITQLEALK (78 aa)) constitute a Carrier domain. S36 is subject to O-(pantetheine 4'-phosphoryl)serine.

The protein belongs to the DltC family. In terms of processing, 4'-phosphopantetheine is transferred from CoA to a specific serine of apo-DCP.

The protein localises to the cytoplasm. Its pathway is cell wall biogenesis; lipoteichoic acid biosynthesis. Functionally, carrier protein involved in the D-alanylation of lipoteichoic acid (LTA). The loading of thioester-linked D-alanine onto DltC is catalyzed by D-alanine--D-alanyl carrier protein ligase DltA. The DltC-carried D-alanyl group is further transferred to cell membrane phosphatidylglycerol (PG) by forming an ester bond, probably catalyzed by DltD. D-alanylation of LTA plays an important role in modulating the properties of the cell wall in Gram-positive bacteria, influencing the net charge of the cell wall. The protein is D-alanyl carrier protein of Listeria welshimeri serovar 6b (strain ATCC 35897 / DSM 20650 / CCUG 15529 / CIP 8149 / NCTC 11857 / SLCC 5334 / V8).